Consider the following 123-residue polypeptide: Methicillin resistance regulatory protein MecI (123 aa).

A DNA-binding region (H-T-H motif) is located at residues 7–71 (EISSAEWEVM…KDNKIFQYYS (65 aa)). Residues 74–123 (EESDIKYKTSKNFINKVYKGGFNSLVLNFVEKEDLSQDEIEELRNILNKK) form an important for dimerization region.

This sequence belongs to the BlaI transcriptional regulatory family. As to quaternary structure, monomer and homodimer. In terms of processing, upon exposure to beta-lactams, proteolytic cleavage at a single site impairs dimerization and abolishes repressor activity.

Its subcellular location is the cytoplasm. Its function is as follows. Transcriptional repressor that constitutively blocks the transcription of the gene for the penicillin-binding protein MecA. Binds DNA as a dimer. In Mammaliicoccus sciuri (Staphylococcus sciuri), this protein is Methicillin resistance regulatory protein MecI (mecI).